Reading from the N-terminus, the 412-residue chain is NAD-dependent dihydropyrimidine dehydrogenase subunit PreT (412 aa).

E286 contributes to the NAD(+) binding site.

The protein belongs to the NADH dehydrogenase family. As to quaternary structure, heterotetramer of 2 PreA and 2 PreT subunits.

It catalyses the reaction 5,6-dihydrouracil + NAD(+) = uracil + NADH + H(+). The catalysed reaction is 5,6-dihydrothymine + NAD(+) = thymine + NADH + H(+). Functionally, involved in pyrimidine base degradation. Catalyzes physiologically the reduction of uracil to 5,6-dihydrouracil (DHU) by using NADH as a specific cosubstrate. It also catalyzes the reverse reaction and the reduction of thymine to 5,6-dihydrothymine (DHT). The protein is NAD-dependent dihydropyrimidine dehydrogenase subunit PreT (preT) of Escherichia coli (strain K12).